A 396-amino-acid polypeptide reads, in one-letter code: Acetate kinase (396 aa).

Residue asparagine 6 coordinates Mg(2+). Position 13 (lysine 13) interacts with ATP. Position 89 (arginine 89) interacts with substrate. Aspartate 145 functions as the Proton donor/acceptor in the catalytic mechanism. ATP is bound by residues 205–209 (HLGNG), 280–282 (DMR), and 329–333 (GVGEN). Glutamate 383 is a binding site for Mg(2+).

Belongs to the acetokinase family. Homodimer. The cofactor is Mg(2+). Mn(2+) serves as cofactor.

The protein localises to the cytoplasm. The enzyme catalyses acetate + ATP = acetyl phosphate + ADP. It functions in the pathway metabolic intermediate biosynthesis; acetyl-CoA biosynthesis; acetyl-CoA from acetate: step 1/2. In terms of biological role, catalyzes the formation of acetyl phosphate from acetate and ATP. Can also catalyze the reverse reaction. The sequence is that of Acetate kinase from Mesoplasma florum (strain ATCC 33453 / NBRC 100688 / NCTC 11704 / L1) (Acholeplasma florum).